Reading from the N-terminus, the 276-residue chain is Large ribosomal subunit protein uL2 (276 aa).

Disordered regions lie at residues 1-20 (MGIK…TTND) and 219-276 (TVRG…RRKK). A compositionally biased stretch (polar residues) spans 7–20 (NPTTNGRRNMTTND).

Belongs to the universal ribosomal protein uL2 family. In terms of assembly, part of the 50S ribosomal subunit. Forms a bridge to the 30S subunit in the 70S ribosome.

Its function is as follows. One of the primary rRNA binding proteins. Required for association of the 30S and 50S subunits to form the 70S ribosome, for tRNA binding and peptide bond formation. It has been suggested to have peptidyltransferase activity; this is somewhat controversial. Makes several contacts with the 16S rRNA in the 70S ribosome. The sequence is that of Large ribosomal subunit protein uL2 from Bacillus cereus (strain Q1).